Here is a 468-residue protein sequence, read N- to C-terminus: Adenosylhomocysteinase (468 aa).

Substrate contacts are provided by Thr57, Asp132, and Glu194. NAD(+) is bound at residue 195 to 197; the sequence is TTT. Substrate is bound by residues Lys224 and Asp228. Residues Asn229, 258 to 263, Glu281, Asn316, 337 to 339, and Asn382 contribute to the NAD(+) site; these read GFGDVG and IGH.

This sequence belongs to the adenosylhomocysteinase family. Requires NAD(+) as cofactor.

The protein resides in the cytoplasm. The enzyme catalyses S-adenosyl-L-homocysteine + H2O = L-homocysteine + adenosine. It functions in the pathway amino-acid biosynthesis; L-homocysteine biosynthesis; L-homocysteine from S-adenosyl-L-homocysteine: step 1/1. Functionally, may play a key role in the regulation of the intracellular concentration of adenosylhomocysteine. The polypeptide is Adenosylhomocysteinase (Methylobacterium sp. (strain 4-46)).